The chain runs to 386 residues: 3-ketoacyl-CoA thiolase (386 aa).

Catalysis depends on cysteine 91, which acts as the Acyl-thioester intermediate. Active-site proton acceptor residues include histidine 342 and cysteine 372.

It belongs to the thiolase-like superfamily. Thiolase family. Heterotetramer of two alpha chains (FadB) and two beta chains (FadA).

It is found in the cytoplasm. It carries out the reaction an acyl-CoA + acetyl-CoA = a 3-oxoacyl-CoA + CoA. Its pathway is lipid metabolism; fatty acid beta-oxidation. In terms of biological role, catalyzes the final step of fatty acid oxidation in which acetyl-CoA is released and the CoA ester of a fatty acid two carbons shorter is formed. The polypeptide is 3-ketoacyl-CoA thiolase (Colwellia psychrerythraea (strain 34H / ATCC BAA-681) (Vibrio psychroerythus)).